Consider the following 128-residue polypeptide: Small ribosomal subunit protein bS6 (128 aa).

The segment at 97–128 is disordered; the sequence is TTPSPMMKEEKSRSLTAAPATDEAKPAEAESA. Positions 118–128 are enriched in basic and acidic residues; sequence DEAKPAEAESA.

This sequence belongs to the bacterial ribosomal protein bS6 family.

Functionally, binds together with bS18 to 16S ribosomal RNA. The chain is Small ribosomal subunit protein bS6 from Aromatoleum aromaticum (strain DSM 19018 / LMG 30748 / EbN1) (Azoarcus sp. (strain EbN1)).